Here is a 203-residue protein sequence, read N- to C-terminus: ATP-dependent Clp protease proteolytic subunit (203 aa).

The active-site Nucleophile is serine 100. Residue histidine 125 is part of the active site.

The protein belongs to the peptidase S14 family. As to quaternary structure, fourteen ClpP subunits assemble into 2 heptameric rings which stack back to back to give a disk-like structure with a central cavity, resembling the structure of eukaryotic proteasomes.

The protein localises to the cytoplasm. It catalyses the reaction Hydrolysis of proteins to small peptides in the presence of ATP and magnesium. alpha-casein is the usual test substrate. In the absence of ATP, only oligopeptides shorter than five residues are hydrolyzed (such as succinyl-Leu-Tyr-|-NHMec, and Leu-Tyr-Leu-|-Tyr-Trp, in which cleavage of the -Tyr-|-Leu- and -Tyr-|-Trp bonds also occurs).. Cleaves peptides in various proteins in a process that requires ATP hydrolysis. Has a chymotrypsin-like activity. Plays a major role in the degradation of misfolded proteins. The sequence is that of ATP-dependent Clp protease proteolytic subunit from Anaeromyxobacter dehalogenans (strain 2CP-1 / ATCC BAA-258).